Consider the following 177-residue polypeptide: Large ribosomal subunit protein uL6 (177 aa).

The protein belongs to the universal ribosomal protein uL6 family. As to quaternary structure, part of the 50S ribosomal subunit.

This protein binds to the 23S rRNA, and is important in its secondary structure. It is located near the subunit interface in the base of the L7/L12 stalk, and near the tRNA binding site of the peptidyltransferase center. The polypeptide is Large ribosomal subunit protein uL6 (Acinetobacter baylyi (strain ATCC 33305 / BD413 / ADP1)).